Here is a 37-residue protein sequence, read N- to C-terminus: Cytochrome b6-f complex subunit 5 (37 aa).

Residues 5–25 (LLSGIVLGLVPITLAGLFVTA) traverse the membrane as a helical segment.

It belongs to the PetG family. In terms of assembly, the 4 large subunits of the cytochrome b6-f complex are cytochrome b6, subunit IV (17 kDa polypeptide, PetD), cytochrome f and the Rieske protein, while the 4 small subunits are PetG, PetL, PetM and PetN. The complex functions as a dimer.

The protein resides in the plastid. The protein localises to the chloroplast thylakoid membrane. Its function is as follows. Component of the cytochrome b6-f complex, which mediates electron transfer between photosystem II (PSII) and photosystem I (PSI), cyclic electron flow around PSI, and state transitions. PetG is required for either the stability or assembly of the cytochrome b6-f complex. The polypeptide is Cytochrome b6-f complex subunit 5 (Gnetum parvifolium (Small-leaved jointfir)).